A 223-amino-acid polypeptide reads, in one-letter code: Deoxyribose-phosphate aldolase (223 aa).

Asp89 (proton donor/acceptor) is an active-site residue. Catalysis depends on Lys152, which acts as the Schiff-base intermediate with acetaldehyde. Catalysis depends on Lys181, which acts as the Proton donor/acceptor.

Belongs to the DeoC/FbaB aldolase family. DeoC type 1 subfamily.

The protein localises to the cytoplasm. The catalysed reaction is 2-deoxy-D-ribose 5-phosphate = D-glyceraldehyde 3-phosphate + acetaldehyde. The protein operates within carbohydrate degradation; 2-deoxy-D-ribose 1-phosphate degradation; D-glyceraldehyde 3-phosphate and acetaldehyde from 2-deoxy-alpha-D-ribose 1-phosphate: step 2/2. Functionally, catalyzes a reversible aldol reaction between acetaldehyde and D-glyceraldehyde 3-phosphate to generate 2-deoxy-D-ribose 5-phosphate. The sequence is that of Deoxyribose-phosphate aldolase from Bacillus cereus (strain ZK / E33L).